Consider the following 325-residue polypeptide: Elongation factor P--(R)-beta-lysine ligase (325 aa).

S76–E78 lines the substrate pocket. ATP-binding positions include R100–E102 and N109. Y118 lines the substrate pocket. Residue E244–L245 participates in ATP binding. A substrate-binding site is contributed by E251. G300 contacts ATP.

Belongs to the class-II aminoacyl-tRNA synthetase family. EpmA subfamily. In terms of assembly, homodimer.

The enzyme catalyses D-beta-lysine + L-lysyl-[protein] + ATP = N(6)-((3R)-3,6-diaminohexanoyl)-L-lysyl-[protein] + AMP + diphosphate + H(+). In terms of biological role, with EpmB is involved in the beta-lysylation step of the post-translational modification of translation elongation factor P (EF-P). Catalyzes the ATP-dependent activation of (R)-beta-lysine produced by EpmB, forming a lysyl-adenylate, from which the beta-lysyl moiety is then transferred to the epsilon-amino group of a conserved specific lysine residue in EF-P. The protein is Elongation factor P--(R)-beta-lysine ligase of Hamiltonella defensa subsp. Acyrthosiphon pisum (strain 5AT).